A 420-amino-acid chain; its full sequence is UDP-N-acetylmuramoylalanine--D-glutamate ligase (420 aa).

109–115 lines the ATP pocket; that stretch reads GSAGKTT.

Belongs to the MurCDEF family.

The protein resides in the cytoplasm. It carries out the reaction UDP-N-acetyl-alpha-D-muramoyl-L-alanine + D-glutamate + ATP = UDP-N-acetyl-alpha-D-muramoyl-L-alanyl-D-glutamate + ADP + phosphate + H(+). It participates in cell wall biogenesis; peptidoglycan biosynthesis. Functionally, cell wall formation. Catalyzes the addition of glutamate to the nucleotide precursor UDP-N-acetylmuramoyl-L-alanine (UMA). The chain is UDP-N-acetylmuramoylalanine--D-glutamate ligase from Chlamydia abortus (strain DSM 27085 / S26/3) (Chlamydophila abortus).